We begin with the raw amino-acid sequence, 377 residues long: Phytanoyl-CoA hydroxylase-interacting protein-like (377 aa).

The Fibronectin type-III domain occupies 52–161; it reads VPQNIKISNI…EINEFCTADY (110 aa).

It belongs to the PHYHIP family.

In terms of biological role, may play a role in the development of the central system. The protein is Phytanoyl-CoA hydroxylase-interacting protein-like (phyhipl) of Danio rerio (Zebrafish).